Here is a 257-residue protein sequence, read N- to C-terminus: Phosphate import ATP-binding protein PstB (257 aa).

The 242-residue stretch at 11–252 (LEVRDLNFFY…PQKKATEDYI (242 aa)) folds into the ABC transporter domain. Residue 43–50 (GPSGCGKS) participates in ATP binding.

This sequence belongs to the ABC transporter superfamily. Phosphate importer (TC 3.A.1.7) family. The complex is composed of two ATP-binding proteins (PstB), two transmembrane proteins (PstC and PstA) and a solute-binding protein (PstS).

The protein resides in the cell inner membrane. The catalysed reaction is phosphate(out) + ATP + H2O = ADP + 2 phosphate(in) + H(+). Functionally, part of the ABC transporter complex PstSACB involved in phosphate import. Responsible for energy coupling to the transport system. The sequence is that of Phosphate import ATP-binding protein PstB from Chromobacterium violaceum (strain ATCC 12472 / DSM 30191 / JCM 1249 / CCUG 213 / NBRC 12614 / NCIMB 9131 / NCTC 9757 / MK).